Here is a 114-residue protein sequence, read N- to C-terminus: Putative antiporter subunit mnhC2 (114 aa).

3 helical membrane passes run 3 to 23 (LILL…ILSI), 28 to 48 (IVIG…SMGT), and 72 to 92 (AIVL…LVLV).

This sequence belongs to the CPA3 antiporters (TC 2.A.63) subunit C family. As to quaternary structure, may form a heterooligomeric complex that consists of seven subunits: mnhA2, mnhB2, mnhC2, mnhD2, mnhE2, mnhF2 and mnhG2.

The protein localises to the cell membrane. This chain is Putative antiporter subunit mnhC2 (mnhC2), found in Staphylococcus aureus (strain MRSA252).